Consider the following 377-residue polypeptide: tRNA(Met) cytidine acetate ligase (377 aa).

ATP is bound by residues 7 to 20, Gly-100, Asn-153, and Arg-178; that span reads VTEY…HLYH.

The protein belongs to the TmcAL family.

The protein localises to the cytoplasm. The enzyme catalyses cytidine(34) in elongator tRNA(Met) + acetate + ATP = N(4)-acetylcytidine(34) in elongator tRNA(Met) + AMP + diphosphate. Catalyzes the formation of N(4)-acetylcytidine (ac(4)C) at the wobble position of elongator tRNA(Met), using acetate and ATP as substrates. First activates an acetate ion to form acetyladenylate (Ac-AMP) and then transfers the acetyl group to tRNA to form ac(4)C34. This chain is tRNA(Met) cytidine acetate ligase, found in Staphylococcus saprophyticus subsp. saprophyticus (strain ATCC 15305 / DSM 20229 / NCIMB 8711 / NCTC 7292 / S-41).